A 456-amino-acid chain; its full sequence is Tyrosine phenol-lyase (456 aa).

Lys257 is modified (N6-(pyridoxal phosphate)lysine).

This sequence belongs to the beta-eliminating lyase family. As to quaternary structure, homotetramer. The cofactor is pyridoxal 5'-phosphate. Post-translationally, contains L-DOPA (3',4'-dihydroxyphenylalanine).

It is found in the cytoplasm. It catalyses the reaction L-tyrosine + H2O = phenol + pyruvate + NH4(+). In Enterobacter agglomerans (Erwinia herbicola), this protein is Tyrosine phenol-lyase (tpl).